The sequence spans 81 residues: Short neurotoxin 1 (81 aa).

A signal peptide spans 1–21; it reads MKTLLLSPVVVTIVCLDLGYT. Disulfide bonds link Cys-24–Cys-43, Cys-38–Cys-60, Cys-62–Cys-73, and Cys-74–Cys-79.

It belongs to the three-finger toxin family. Short-chain subfamily. Type I alpha-neurotoxin sub-subfamily. Expressed by the venom gland.

It localises to the secreted. Functionally, binds to muscle nicotinic acetylcholine receptor (nAChR) and inhibit acetylcholine from binding to the receptor, thereby impairing neuromuscular transmission. This is Short neurotoxin 1 from Hydrophis peronii (Spiny-headed seasnake).